We begin with the raw amino-acid sequence, 338 residues long: uncharacterized protein (338 aa).

6 consecutive transmembrane segments (helical) span residues 13-33 (PAYS…DFLM), 71-91 (GLYS…ALFF), 110-130 (TLCF…VYVP), 176-196 (YGYR…LLFY), 218-238 (LITG…LDVA), and 301-321 (FRGF…MFVF). Solcar repeat units lie at residues 13–100 (PAYS…TKRH), 108–202 (PETL…LRQV), and 216–328 (RELI…IIRL).

Belongs to the mitochondrial carrier (TC 2.A.29) family.

It localises to the mitochondrion inner membrane. Mitochondrial solute carriers shuttle metabolites, nucleotides, and cofactors through the mitochondrial inner membrane. This is an uncharacterized protein from Schizosaccharomyces pombe (strain 972 / ATCC 24843) (Fission yeast).